Consider the following 327-residue polypeptide: MAAPIRAFVLRVLSDSTRNIHHVLRCRSKYLCRRAAITARRGYSDSTEGRSTHFGFQTVPEEEKAEKVYKVFESVAKKYDVMNDAMSLGIHRLWKDTLLHIMNPQPGLRLLDTAGGTGDISFRFLEYTRSMYDRQQRLRAKSQQTPSWKDIAGHYVSDEEGPPQSRAVVCDINKEMLKVGKQRAEDAGITTGLSWVAGDAEELPFDDDQFDMYTIAFGIRNVTHIEQALQEAFRVLKPGGRFMCLEFSKVTNPLLARLYDAYSFQMIPVLGEVIAGDWKSYQYLVESIRKFPDQEIFKEMIEDAGFFRVQYFNLTGGIVAIHSGFKL.

The transit peptide at 1–43 (MAAPIRAFVLRVLSDSTRNIHHVLRCRSKYLCRRAAITARRGY) directs the protein to the mitochondrion. S-adenosyl-L-methionine contacts are provided by residues Thr117, Asp171, and 199 to 200 (DA).

It belongs to the class I-like SAM-binding methyltransferase superfamily. MenG/UbiE family. As to quaternary structure, component of a multi-subunit COQ enzyme complex, composed of at least coq3, coq4, coq5, coq6, coq7 and coq9.

Its subcellular location is the mitochondrion inner membrane. The enzyme catalyses a 2-methoxy-6-(all-trans-polyprenyl)benzene-1,4-diol + S-adenosyl-L-methionine = a 5-methoxy-2-methyl-3-(all-trans-polyprenyl)benzene-1,4-diol + S-adenosyl-L-homocysteine + H(+). It functions in the pathway cofactor biosynthesis; ubiquinone biosynthesis. Methyltransferase required for the conversion of 2-polyprenyl-6-methoxy-1,4-benzoquinol (DDMQH2) to 2-polyprenyl-3-methyl-6-methoxy-1,4-benzoquinol (DMQH2). This is 2-methoxy-6-polyprenyl-1,4-benzoquinol methylase, mitochondrial from Danio rerio (Zebrafish).